Here is a 57-residue protein sequence, read N- to C-terminus: Insulin (57 aa).

3 cysteine pairs are disulfide-bonded: cysteine 12–cysteine 43, cysteine 24–cysteine 56, and cysteine 42–cysteine 47.

The protein belongs to the insulin family. In terms of assembly, heterodimer of a B chain and an A chain linked by two disulfide bonds.

It is found in the secreted. Functionally, insulin decreases blood glucose concentration. It increases cell permeability to monosaccharides, amino acids and fatty acids. It accelerates glycolysis, the pentose phosphate cycle, and glycogen synthesis in liver. This is Insulin (ins) from Lampetra fluviatilis (European river lamprey).